Consider the following 224-residue polypeptide: Urease accessory protein UreF (224 aa).

It belongs to the UreF family. As to quaternary structure, ureD, UreF and UreG form a complex that acts as a GTP-hydrolysis-dependent molecular chaperone, activating the urease apoprotein by helping to assemble the nickel containing metallocenter of UreC. The UreE protein probably delivers the nickel.

Its subcellular location is the cytoplasm. Its function is as follows. Required for maturation of urease via the functional incorporation of the urease nickel metallocenter. The sequence is that of Urease accessory protein UreF from Pseudomonas fluorescens (strain SBW25).